Consider the following 158-residue polypeptide: Phosphopantetheine adenylyltransferase (158 aa).

A substrate-binding site is contributed by Thr-9. ATP contacts are provided by residues 9 to 10 (TF) and His-17. Substrate is bound by residues Lys-41, Leu-73, and Arg-87. ATP contacts are provided by residues 88–90 (GLR), Glu-98, and 123–129 (YAYISSS).

This sequence belongs to the bacterial CoaD family. In terms of assembly, homohexamer. Requires Mg(2+) as cofactor.

It is found in the cytoplasm. It catalyses the reaction (R)-4'-phosphopantetheine + ATP + H(+) = 3'-dephospho-CoA + diphosphate. It functions in the pathway cofactor biosynthesis; coenzyme A biosynthesis; CoA from (R)-pantothenate: step 4/5. Reversibly transfers an adenylyl group from ATP to 4'-phosphopantetheine, yielding dephospho-CoA (dPCoA) and pyrophosphate. The chain is Phosphopantetheine adenylyltransferase from Allochromatium vinosum (strain ATCC 17899 / DSM 180 / NBRC 103801 / NCIMB 10441 / D) (Chromatium vinosum).